The sequence spans 307 residues: Tropinone reductase homolog At2g29340 (307 aa).

13–37 is an NADP(+) binding site; it reads LVTGGASGIGYAIVEELAGFGARIH. Ser146 lines the substrate pocket. Residue Tyr159 is the Proton acceptor of the active site.

This sequence belongs to the short-chain dehydrogenases/reductases (SDR) family. SDR65C subfamily.

This chain is Tropinone reductase homolog At2g29340, found in Arabidopsis thaliana (Mouse-ear cress).